The chain runs to 583 residues: Pectinesterase/pectinesterase inhibitor U1 (583 aa).

Positions 1-40 are cleaved as a signal peptide; it reads MTRVEDFFSKQIDFCKRKKKIYLAIVASVLLVAAVIGVVA. Residues 60–221 form a pectinesterase inhibitor U1 region; the sequence is SSAHAIVKSA…EKMCSNALAM (162 aa). 3 N-linked (GlcNAc...) asparagine glycosylation sites follow: asparagine 85, asparagine 105, and asparagine 224. The tract at residues 272 to 570 is pectinesterase U1; it reads DVVVAADGSG…TPGRFIAGGS (299 aa). The substrate site is built by threonine 347 and glutamine 377. The Proton donor; for pectinesterase activity role is filled by aspartate 400. Cysteine 414 and cysteine 434 are joined by a disulfide. The active-site Nucleophile; for pectinesterase activity is aspartate 421. Substrate is bound by residues arginine 489 and tryptophan 491.

In the N-terminal section; belongs to the PMEI family. This sequence in the C-terminal section; belongs to the pectinesterase family.

It localises to the secreted. The protein localises to the cell wall. The enzyme catalyses [(1-&gt;4)-alpha-D-galacturonosyl methyl ester](n) + n H2O = [(1-&gt;4)-alpha-D-galacturonosyl](n) + n methanol + n H(+). The protein operates within glycan metabolism; pectin degradation; 2-dehydro-3-deoxy-D-gluconate from pectin: step 1/5. Acts in the modification of cell walls via demethylesterification of cell wall pectin. The polypeptide is Pectinesterase/pectinesterase inhibitor U1 (PMEU1) (Solanum lycopersicum (Tomato)).